The following is a 498-amino-acid chain: ATP synthase subunit beta, chloroplastic (498 aa).

172–179 is a binding site for ATP; the sequence is GGAGVGKT.

It belongs to the ATPase alpha/beta chains family. F-type ATPases have 2 components, CF(1) - the catalytic core - and CF(0) - the membrane proton channel. CF(1) has five subunits: alpha(3), beta(3), gamma(1), delta(1), epsilon(1). CF(0) has four main subunits: a(1), b(1), b'(1) and c(9-12).

It is found in the plastid. Its subcellular location is the chloroplast thylakoid membrane. The catalysed reaction is ATP + H2O + 4 H(+)(in) = ADP + phosphate + 5 H(+)(out). Its function is as follows. Produces ATP from ADP in the presence of a proton gradient across the membrane. The catalytic sites are hosted primarily by the beta subunits. The sequence is that of ATP synthase subunit beta, chloroplastic from Populus alba (White poplar).